Consider the following 485-residue polypeptide: GPI-anchored wall transfer protein 1 (485 aa).

Helical transmembrane passes span 48–68 (LALIYDYILNVLTILASITVY) and 73–93 (SYLHYFIVIPSLVIYLVNYHV). N-linked (GlcNAc...) asparagine glycosylation occurs at N103. The next 2 helical transmembrane spans lie at 123 to 143 (YRSQMLIITNLAILAVDFPIF) and 152 to 172 (TWGTSMMDLGVGSFVFSMGLA). Residue N180 is glycosylated (N-linked (GlcNAc...) asparagine). 6 consecutive transmembrane segments (helical) span residues 200 to 217 (FIKSVPILVLGAIRFVSV), 229 to 249 (YGIHWNFFFTLGFLPIVLGIL), 259 to 279 (FIIGIGISIAYEVALNKTGLL), 300 to 320 (IFSFIGYLCIFIIGQSFGSFV), 359 to 379 (LYLACIFYHLAFSLFISNLSF), and 390 to 410 (FPYVMWVVSYNATFLLCYDLI). N417 is a glycosylation site (N-linked (GlcNAc...) asparagine). 2 consecutive transmembrane segments (helical) span residues 431 to 451 (LFIFLVSNLLTGFINMSINTL) and 457 to 477 (MAVIILIGYSLTWTLLALYLD).

It belongs to the PIGW family.

The protein resides in the endoplasmic reticulum membrane. The protein operates within glycolipid biosynthesis; glycosylphosphatidylinositol-anchor biosynthesis. In terms of biological role, probable acetyltransferase, which acetylates the inositol ring of phosphatidylinositol during biosynthesis of GPI-anchor. This Candida albicans (strain SC5314 / ATCC MYA-2876) (Yeast) protein is GPI-anchored wall transfer protein 1 (GWT1).